The chain runs to 130 residues: Small ribosomal subunit protein uS9 (130 aa).

A disordered region spans residues 108–130 (PRMKERRKYGLKKARRAPQFSKR). The segment covering 111–130 (KERRKYGLKKARRAPQFSKR) has biased composition (basic residues).

This sequence belongs to the universal ribosomal protein uS9 family.

In Desulforamulus reducens (strain ATCC BAA-1160 / DSM 100696 / MI-1) (Desulfotomaculum reducens), this protein is Small ribosomal subunit protein uS9.